The chain runs to 925 residues: Isoleucine--tRNA ligase (925 aa).

The 'HIGH' region motif lies at Pro57–His67. Glu553 serves as a coordination point for L-isoleucyl-5'-AMP. Residues Lys594–Ser598 carry the 'KMSKS' region motif. ATP is bound at residue Lys597. The Zn(2+) site is built by Cys889, Cys892, Cys909, and Cys912.

It belongs to the class-I aminoacyl-tRNA synthetase family. IleS type 1 subfamily. As to quaternary structure, monomer. The cofactor is Zn(2+).

Its subcellular location is the cytoplasm. The catalysed reaction is tRNA(Ile) + L-isoleucine + ATP = L-isoleucyl-tRNA(Ile) + AMP + diphosphate. In terms of biological role, catalyzes the attachment of isoleucine to tRNA(Ile). As IleRS can inadvertently accommodate and process structurally similar amino acids such as valine, to avoid such errors it has two additional distinct tRNA(Ile)-dependent editing activities. One activity is designated as 'pretransfer' editing and involves the hydrolysis of activated Val-AMP. The other activity is designated 'posttransfer' editing and involves deacylation of mischarged Val-tRNA(Ile). The chain is Isoleucine--tRNA ligase from Brevibacillus brevis (strain 47 / JCM 6285 / NBRC 100599).